Reading from the N-terminus, the 106-residue chain is MATFELYRRSTIGMCLTETLDEMVSSGTLSPELAIQVLVQFDKSMTEALENQVKSKVSIKGHLHTYRFCDNVWTFILTEASFKNEETTEQVGKVKIVACDSKLLSQ.

Belongs to the TFIIA subunit 2 family. TFIIA is a heterodimer of the large unprocessed subunit 1 and a small subunit gamma. It was originally believed to be a heterotrimer of an alpha, a beta and a gamma subunit.

Its subcellular location is the nucleus. In terms of biological role, TFIIA is a component of the transcription machinery of RNA polymerase II and plays an important role in transcriptional activation. TFIIA in a complex with TBP mediates transcriptional activity. Protein involved in the resistance to X.oryzae. This is Transcription initiation factor IIA subunit 2 (TFIIAy) from Oryza sativa subsp. indica (Rice).